The primary structure comprises 357 residues: Probable cinnamyl alcohol dehydrogenase (357 aa).

Cysteine 47 serves as a coordination point for Zn(2+). Residue serine 49 participates in NADP(+) binding. Positions 69, 70, 100, 103, 106, 114, and 163 each coordinate Zn(2+). Residues threonine 167, 188 to 193 (GLGGVG), 211 to 216 (SSSDKK), threonine 251, glycine 275, and 298 to 300 (SFI) contribute to the NADP(+) site.

This sequence belongs to the zinc-containing alcohol dehydrogenase family. In terms of assembly, homodimer. Zn(2+) is required as a cofactor.

It carries out the reaction (E)-cinnamyl alcohol + NADP(+) = (E)-cinnamaldehyde + NADPH + H(+). The enzyme catalyses (E)-coniferol + NADP(+) = (E)-coniferaldehyde + NADPH + H(+). The catalysed reaction is (E)-sinapyl alcohol + NADP(+) = (E)-sinapaldehyde + NADPH + H(+). It catalyses the reaction (E)-4-coumaroyl alcohol + NADP(+) = (E)-4-coumaraldehyde + NADPH + H(+). It carries out the reaction (E)-caffeyl alcohol + NADP(+) = (E)-caffeyl aldehyde + NADPH + H(+). It functions in the pathway aromatic compound metabolism; phenylpropanoid biosynthesis. Functionally, involved in lignin biosynthesis. Catalyzes the final step specific for the production of lignin monomers. Catalyzes the NADPH-dependent reduction of coniferaldehyde, 5-hydroxyconiferaldehyde, sinapaldehyde, 4-coumaraldehyde and caffeyl aldehyde to their respective alcohols. The polypeptide is Probable cinnamyl alcohol dehydrogenase (Pinus taeda (Loblolly pine)).